A 426-amino-acid chain; its full sequence is GATA type zinc finger protein asd-4 (426 aa).

A GATA-type zinc finger spans residues 16 to 40 (CQNCATSTTPLWRRDEMGQVLCNAC). Disordered regions lie at residues 70-143 (RPDL…NPHI) and 159-178 (PGFGVPTASPGRAPSPMNGE). The span at 104 to 113 (PNNPAAAARR) shows a compositional bias: low complexity. Polar residues predominate over residues 128–138 (SPVSRTGTPNV). Positions 182–292 (QTHEQLLAAN…QDNGRHKKIR (111 aa)) form a coiled coil. Positions 306–318 (VEPQQPEQQQPAP) are enriched in low complexity. The tract at residues 306 to 426 (VEPQQPEQQQ…PVEEAPKAES (121 aa)) is disordered. Positions 335–353 (APAPAPEAAPEQAPAPAPE) are enriched in pro residues. Positions 354–419 (PVQEQAQEPE…SEPPTTAPVE (66 aa)) are enriched in low complexity.

Homotetramer.

The protein resides in the nucleus. Functionally, transcriptional regulator that functions in sexual development; disruption of asd-4 gene results in agenesis of ascus and ascospore with macroscopically normal fruiting body formation. The GATA-type zinc finger domain binds to DNA sequences from its own promoter region. This is GATA type zinc finger protein asd-4 (asd-4) from Neurospora crassa (strain ATCC 24698 / 74-OR23-1A / CBS 708.71 / DSM 1257 / FGSC 987).